Consider the following 119-residue polypeptide: Large ribosomal subunit protein uL18 (119 aa).

Belongs to the universal ribosomal protein uL18 family. Part of the 50S ribosomal subunit; part of the 5S rRNA/L5/L18/L25 subcomplex. Contacts the 5S and 23S rRNAs.

Functionally, this is one of the proteins that bind and probably mediate the attachment of the 5S RNA into the large ribosomal subunit, where it forms part of the central protuberance. This chain is Large ribosomal subunit protein uL18, found in Micrococcus luteus (Micrococcus lysodeikticus).